The primary structure comprises 127 residues: Cyclin-dependent protein kinase inhibitor SIM (127 aa).

The interval 21–71 is disordered; the sequence is RANTNRDDDGGGCTTPTSSDHKIPPTTATTPPPPPQKPRPPSTPSSLGIRS. Over residues 50–63 the composition is skewed to pro residues; that stretch reads TPPPPPQKPRPPST.

As to quaternary structure, interacts with CDKA-1. Interacts with CYCD2-1, CYCD3-2 and CYCD4-1. Interacts with CDKB1-1. Interacts with CPR5. Expressed in the shoot apical meristem, leaf primordia and the elongation zone of the root.

The protein resides in the nucleus. Cyclin-dependent protein kinase (CDK) inhibitor that functions as a repressor of mitosis in the endoreduplication cell cycle. Inhibits the kinase activity of CYCD3-1/CDKA-1, CYCD2-1/CDKA-1 and CYCB1-1/CDKB1-1 complexes in a dose dependent manner. Cooperates with SMR1 and SMR2 to promote endoreplication during leaf development. Required for normal trichome endoreplicating cell cycles. Positive regulator of effector-triggered immunity (ETI). The polypeptide is Cyclin-dependent protein kinase inhibitor SIM (Arabidopsis thaliana (Mouse-ear cress)).